The sequence spans 598 residues: Mitogen-activated protein kinase 19 (598 aa).

The 292-residue stretch at 25–316 (YRILEVIGKG…AAEALADPYF (292 aa)) folds into the Protein kinase domain. Residues 31 to 39 (IGKGSYGVV) and Lys-54 contribute to the ATP site. The active-site Proton acceptor is the Asp-151. Residue Thr-187 is modified to Phosphothreonine. Residues 187–189 (TDY) carry the TXY motif. Tyr-189 carries the phosphotyrosine modification. Residue Thr-192 is modified to Phosphothreonine. The segment at 396-486 (GKSGPVIPPD…VTYENDRNLK (91 aa)) is disordered. Low complexity predominate over residues 414–425 (SAVHSSAVNSNA).

This sequence belongs to the protein kinase superfamily. CMGC Ser/Thr protein kinase family. MAP kinase subfamily. Dually phosphorylated on Thr-187 and Tyr-189, which activates the enzyme.

The catalysed reaction is L-seryl-[protein] + ATP = O-phospho-L-seryl-[protein] + ADP + H(+). The enzyme catalyses L-threonyl-[protein] + ATP = O-phospho-L-threonyl-[protein] + ADP + H(+). Activated by threonine and tyrosine phosphorylation. The polypeptide is Mitogen-activated protein kinase 19 (MPK19) (Arabidopsis thaliana (Mouse-ear cress)).